The chain runs to 773 residues: Circadian clock protein PASD1 (773 aa).

In terms of domain architecture, PAS spans 30–102 (YDYFNQVTLQ…IILKFPLLNS (73 aa)). The segment at 313–361 (SVDQEGPMDQQDPENPVAPLDQAGLMDPVDPEDSVDLGAAGASAQPLQP) is disordered. The tract at residues 365-412 (VAYDIISQELELMKKLKEQLEERTWLLHDAIQNQQNALELMMDHLQKQ) is necessary for transcriptional repression. A coiled-coil region spans residues 365-412 (VAYDIISQELELMKKLKEQLEERTWLLHDAIQNQQNALELMMDHLQKQ). 3 disordered regions span residues 427–448 (SEAV…PLPH), 506–569 (QRKV…QLQE), and 732–773 (GVEG…NKPC). Positions 475–553 (VAFNQQQLVQ…QERKKWQGQM (79 aa)) form a coiled coil. Over residues 506-536 (QRKVQKQKKMQEKKKLQEQKMQEKKKLQEQR) the composition is skewed to basic and acidic residues.

In terms of assembly, interacts with the CLOCK-BMAL1 heterodimer; this interaction inhibits CLOCK-BMAL1 transcriptional activation and suppress circadian timekeeping. Interacts with BMAL1. As to expression, testis-specific. Expressed in a broad range of cancer cells, including melanoma, lung cancer, and breast cancer (at protein level). Testis-specific. Found in histologically normal tissues from patients with uterus, lung and small intestine cancers. Widespread expression seen in solid tumors and diffuse large B-cell lymphoma (DLBCL)-derived cell lines. Isoform 2 is expressed in all DLBCL-derived cell lines, while isoform 1 is preferentially expressed in cell lines derived from non-germinal center DLBCL.

It localises to the nucleus. In terms of biological role, functions as a suppressor of the biological clock that drives the daily circadian rhythms of cells throughout the body. Acts as a nuclear repressor of the CLOCK-BMAL1 heterodimer-mediated transcriptional activation of the core clock components. Inhibits circadian clock function in cancer cells, when overexpressed. The chain is Circadian clock protein PASD1 from Homo sapiens (Human).